A 272-amino-acid polypeptide reads, in one-letter code: Undecaprenyl-diphosphatase (272 aa).

Helical transmembrane passes span 4 to 24, 43 to 63, 86 to 106, 109 to 129, 145 to 165, 186 to 206, 222 to 242, and 249 to 269; these read FEVI…FLPI, GGRV…CWLY, ISVL…VDFI, VLFS…IIFW, ITFK…IPGT, TEFS…FDLI, VGFV…VLFV, and VFAW…MFFN.

This sequence belongs to the UppP family.

Its subcellular location is the cell inner membrane. The catalysed reaction is di-trans,octa-cis-undecaprenyl diphosphate + H2O = di-trans,octa-cis-undecaprenyl phosphate + phosphate + H(+). In terms of biological role, catalyzes the dephosphorylation of undecaprenyl diphosphate (UPP). Confers resistance to bacitracin. This is Undecaprenyl-diphosphatase from Acinetobacter baumannii (strain SDF).